The following is a 309-amino-acid chain: tRNA dimethylallyltransferase (309 aa).

Gly13–Thr20 is an ATP binding site. Thr15–Thr20 lines the substrate pocket. Interaction with substrate tRNA stretches follow at residues Asp38–Gln41 and Gln162–Arg166.

This sequence belongs to the IPP transferase family. In terms of assembly, monomer. It depends on Mg(2+) as a cofactor.

It catalyses the reaction adenosine(37) in tRNA + dimethylallyl diphosphate = N(6)-dimethylallyladenosine(37) in tRNA + diphosphate. Its function is as follows. Catalyzes the transfer of a dimethylallyl group onto the adenine at position 37 in tRNAs that read codons beginning with uridine, leading to the formation of N6-(dimethylallyl)adenosine (i(6)A). This chain is tRNA dimethylallyltransferase, found in Nitratidesulfovibrio vulgaris (strain ATCC 29579 / DSM 644 / CCUG 34227 / NCIMB 8303 / VKM B-1760 / Hildenborough) (Desulfovibrio vulgaris).